The sequence spans 280 residues: uncharacterized protein (280 aa).

The next 3 membrane-spanning stretches (helical) occupy residues 15–35, 68–88, and 94–114; these read IVDILLVAVILWIGVFIINRL, IGFIFYVISLFVHDFGKILAG, and IVIGFGAQSLIKDVLAGVFLI.

It belongs to the MscS (TC 1.A.23) family.

The protein localises to the cell membrane. In terms of biological role, may play a role in resistance to osmotic downshock. This is an uncharacterized protein from Bacillus subtilis (strain 168).